Here is a 270-residue protein sequence, read N- to C-terminus: 4-hydroxy-tetrahydrodipicolinate reductase (270 aa).

NAD(+) is bound by residues 9-14 and Glu35; that span reads GSGGRM. Arg36 lines the NADP(+) pocket. Residues 99–101 and 123–126 each bind NAD(+); these read GTT and ASNY. His156 functions as the Proton donor/acceptor in the catalytic mechanism. His157 contributes to the (S)-2,3,4,5-tetrahydrodipicolinate binding site. Lys160 functions as the Proton donor in the catalytic mechanism. 166 to 167 contributes to the (S)-2,3,4,5-tetrahydrodipicolinate binding site; that stretch reads GT.

It belongs to the DapB family.

It localises to the cytoplasm. The enzyme catalyses (S)-2,3,4,5-tetrahydrodipicolinate + NAD(+) + H2O = (2S,4S)-4-hydroxy-2,3,4,5-tetrahydrodipicolinate + NADH + H(+). The catalysed reaction is (S)-2,3,4,5-tetrahydrodipicolinate + NADP(+) + H2O = (2S,4S)-4-hydroxy-2,3,4,5-tetrahydrodipicolinate + NADPH + H(+). It participates in amino-acid biosynthesis; L-lysine biosynthesis via DAP pathway; (S)-tetrahydrodipicolinate from L-aspartate: step 4/4. Functionally, catalyzes the conversion of 4-hydroxy-tetrahydrodipicolinate (HTPA) to tetrahydrodipicolinate. The sequence is that of 4-hydroxy-tetrahydrodipicolinate reductase from Histophilus somni (strain 2336) (Haemophilus somnus).